Here is a 514-residue protein sequence, read N- to C-terminus: Peptide chain release factor 3 (514 aa).

The tr-type G domain maps to Lys-8 to His-268. GTP contacts are provided by residues Ser-17–Thr-24, Asp-85–His-89, and Asn-139–Asp-142.

The protein belongs to the TRAFAC class translation factor GTPase superfamily. Classic translation factor GTPase family. PrfC subfamily.

It localises to the cytoplasm. Increases the formation of ribosomal termination complexes and stimulates activities of RF-1 and RF-2. It binds guanine nucleotides and has strong preference for UGA stop codons. It may interact directly with the ribosome. The stimulation of RF-1 and RF-2 is significantly reduced by GTP and GDP, but not by GMP. In Streptococcus pneumoniae (strain CGSP14), this protein is Peptide chain release factor 3.